Reading from the N-terminus, the 436-residue chain is Glutamate-1-semialdehyde 2,1-aminomutase (436 aa).

N6-(pyridoxal phosphate)lysine is present on Lys269.

This sequence belongs to the class-III pyridoxal-phosphate-dependent aminotransferase family. HemL subfamily. Homodimer. It depends on pyridoxal 5'-phosphate as a cofactor.

It localises to the cytoplasm. It carries out the reaction (S)-4-amino-5-oxopentanoate = 5-aminolevulinate. It functions in the pathway porphyrin-containing compound metabolism; protoporphyrin-IX biosynthesis; 5-aminolevulinate from L-glutamyl-tRNA(Glu): step 2/2. The protein operates within porphyrin-containing compound metabolism; chlorophyll biosynthesis. This Heliobacterium modesticaldum (strain ATCC 51547 / Ice1) protein is Glutamate-1-semialdehyde 2,1-aminomutase.